Reading from the N-terminus, the 69-residue chain is Large ribosomal subunit protein bL31 (69 aa).

Cys-17, Cys-19, Cys-37, and Cys-40 together coordinate Zn(2+).

Belongs to the bacterial ribosomal protein bL31 family. Type A subfamily. Part of the 50S ribosomal subunit. It depends on Zn(2+) as a cofactor.

Functionally, binds the 23S rRNA. The chain is Large ribosomal subunit protein bL31 from Thermoanaerobacter pseudethanolicus (strain ATCC 33223 / 39E) (Clostridium thermohydrosulfuricum).